The sequence spans 920 residues: Protein FAN (920 aa).

In terms of domain architecture, GRAM spans 176–247; it reads RLARTSFDKN…QDVRRIYKRR (72 aa). Residues 189-286 enclose the BEACH-type PH domain; it reads SVSEKLHMEC…DRDDLYFYIA (98 aa). A BEACH domain is found at 290–575; it reads EHHAAEHTAE…QLFVTPHPRR (286 aa). WD repeat units lie at residues 631–661, 673–703, 715–743, 764–794, 806–836, and 887–917; these read IHKE…KMFS, FSNM…YFYS, GHDD…KVWS, EHDV…NIWD, CHSG…NVID, and GHTG…MFWK.

Functionally, couples the p55 TNF-receptor (TNF-R55 / TNFR1) to neutral sphingomyelinase (N-SMASE). Specifically binds to the N-smase activation domain of TNF-R55. May regulate ceramide production by N-SMASE. In Mus musculus (Mouse), this protein is Protein FAN (Nsmaf).